We begin with the raw amino-acid sequence, 873 residues long: Nonsense-mediated mRNA decay factor SMG8 (873 aa).

Residues 531-604 (AKKMAQREDE…ESMASKTERE (74 aa)) are disordered. The span at 540 to 550 (ELAEEDTDLDI) shows a compositional bias: acidic residues. Low complexity-rich tracts occupy residues 551 to 562 (PESLLDPDSTSP) and 574 to 583 (SSSESSSQES). Basic and acidic residues predominate over residues 591–604 (SRRDESMASKTERE).

This sequence belongs to the SMG8 family.

In terms of biological role, involved in nonsense-mediated decay (NMD) of mRNAs containing premature stop codons. Probable component of kinase complex containing smg-1 and recruited to stalled ribosomes. In Caenorhabditis elegans, this protein is Nonsense-mediated mRNA decay factor SMG8 (smg-8).